Here is a 187-residue protein sequence, read N- to C-terminus: GTP cyclohydrolase 1 (187 aa).

Zn(2+)-binding residues include C76, H79, and C148.

The protein belongs to the GTP cyclohydrolase I family. As to quaternary structure, toroid-shaped homodecamer, composed of two pentamers of five dimers.

The enzyme catalyses GTP + H2O = 7,8-dihydroneopterin 3'-triphosphate + formate + H(+). It participates in cofactor biosynthesis; 7,8-dihydroneopterin triphosphate biosynthesis; 7,8-dihydroneopterin triphosphate from GTP: step 1/1. The protein is GTP cyclohydrolase 1 of Streptococcus suis (strain 98HAH33).